The sequence spans 280 residues: Rhomboid-like protein 11, chloroplastic (280 aa).

The transit peptide at 1-57 directs the protein to the chloroplast; it reads MSQLLHLHRLSLPQSSLRFRFPPLHRRRAASSPTNSTQPPLQFRPLTVSRSQITCRF. The Stromal segment spans residues 58–82; it reads SQSDITPQFELDKAKDNRKPQKRAN. Residues 83-103 traverse the membrane as a helical segment; that stretch reads GIFWIILINLGIYLADHFFQV. Over 104–117 the chain is Chloroplast intermembrane; it reads RGIKSLYLYHNFPA. Residues 118 to 140 traverse the membrane as a helical segment; sequence WYQFVTATFCHANWNHLSSNLFF. Residues 141–154 lie on the Stromal side of the membrane; that stretch reads LYIFGKLVEEEEGN. The helical transmembrane segment at 155-175 threads the bilayer; sequence FGLWLSYLFTGVGANLVSWLV. At 176 to 178 the chain is on the chloroplast intermembrane side; the sequence is LPR. The helical transmembrane segment at 179 to 199 threads the bilayer; that stretch reads NAVSVGASGAVFGLFAISVLV. Ser-186 serves as the catalytic Nucleophile. The Stromal portion of the chain corresponds to 200–243; that stretch reads KMSWDWRKILEVLILGQFVIERVMEAAQASAGLSGTIYGGYSLQ. Residues 244-264 form a helical membrane-spanning segment; it reads TVNHIAHLSGALVGVVLVWLL. His-250 (charge relay system) is an active-site residue. At 265–280 the chain is on the chloroplast intermembrane side; sequence SKFPSASMDQDVKKSS.

Belongs to the peptidase S54 family. Homooligomer.

The protein resides in the plastid. Its subcellular location is the chloroplast inner membrane. Functionally, rhomboid-type serine protease that catalyzes intramembrane proteolysis. May be involved in TIC22 processing during its import. This is Rhomboid-like protein 11, chloroplastic from Arabidopsis thaliana (Mouse-ear cress).